The chain runs to 1400 residues: ABC transporter G family member 30 (1400 aa).

Asparagine 116 is a glycosylation site (N-linked (GlcNAc...) asparagine). The ABC transporter 1 domain occupies 141–414; it reads LLSEFICSKK…FEEFGFKCPE (274 aa). 174–181 serves as a coordination point for ATP; it reads GPPGCGKT. Asparagine 472 carries an N-linked (GlcNAc...) asparagine glycan. Positions 492–704 constitute an ABC transmembrane type-2 1 domain; sequence EMLKACSRRE…AEIGLTANEF (213 aa). The next 7 helical transmembrane spans lie at 510 to 530, 553 to 573, 582 to 602, 628 to 648, 652 to 672, 679 to 699, and 738 to 758; these read FIYL…MTVF, LFRL…RLGV, FYPA…LSVL, FLIL…IAAI, IIAS…FGGF, MPAW…EIGL, and TAFG…VLAL. Residues 808-1053 form the ABC transporter 2 domain; sequence VTFQNVQYYI…VIEYFESFSG (246 aa). 845 to 852 serves as a coordination point for ATP; it reads GVSGAGKT. N-linked (GlcNAc...) asparagine glycosylation is found at asparagine 899 and asparagine 1040. The region spanning 1125–1339 is the ABC transmembrane type-2 2 domain; it reads VQLKACLWKQ…VLEGLLSSQY (215 aa). 7 consecutive transmembrane segments (helical) span residues 1144-1164, 1179-1199, 1228-1248, 1263-1283, 1289-1309, 1317-1337, and 1372-1392; these read HNIT…LLFW, IFGS…AAVI, VLIE…IVYP, LYSI…MVAL, MAVT…GFVI, WWIW…LLSS, and VVAF…AFFM.

This sequence belongs to the ABC transporter superfamily. ABCG family. PDR (TC 3.A.1.205) subfamily. As to expression, confined to roots. In seeds, mainly expressed in the embryo and, to a lesser extent, in the endosperm.

The protein resides in the cell membrane. It carries out the reaction abscisate(out) + ATP + H2O = abscisate(in) + ADP + phosphate + H(+). Its function is as follows. Together with ABCG40, import into the embryo the abscisic acid (ABA) delivered from the endosperm via ABCG25 and ABCG31-mediated export to suppress radicle extension and subsequent embryonic growth. Involved in root secretion of phytochemicals (phenolics and sugars) which regulate soil microbiota, influencing both fungal and bacterial communities. May be a general defense protein. The sequence is that of ABC transporter G family member 30 from Arabidopsis thaliana (Mouse-ear cress).